We begin with the raw amino-acid sequence, 607 residues long: Threonine--tRNA ligase (607 aa).

The interval 1-143 (MRVLYIHAER…SFKPEEARVA (143 aa)) is editing domain. Catalytic stretches follow at residues 193–489 (PRYL…PRLP) and 194–489 (RYLD…PRLP). Positions 286, 337, and 458 each coordinate Zn(2+).

It belongs to the class-II aminoacyl-tRNA synthetase family. Homodimer. It depends on Zn(2+) as a cofactor.

It is found in the cytoplasm. The enzyme catalyses tRNA(Thr) + L-threonine + ATP = L-threonyl-tRNA(Thr) + AMP + diphosphate + H(+). Functionally, catalyzes the attachment of threonine to tRNA(Thr) in a two-step reaction: L-threonine is first activated by ATP to form Thr-AMP and then transferred to the acceptor end of tRNA(Thr). Also edits incorrectly charged L-seryl-tRNA(Thr). In Pyrobaculum calidifontis (strain DSM 21063 / JCM 11548 / VA1), this protein is Threonine--tRNA ligase.